The sequence spans 122 residues: Large ribosomal subunit protein uL18 (122 aa).

Residues methionine 1–arginine 27 form a disordered region. A compositionally biased stretch (basic residues) spans glutamine 9–leucine 21.

It belongs to the universal ribosomal protein uL18 family. As to quaternary structure, part of the 50S ribosomal subunit; part of the 5S rRNA/L5/L18/L25 subcomplex. Contacts the 5S and 23S rRNAs.

Its function is as follows. This is one of the proteins that bind and probably mediate the attachment of the 5S RNA into the large ribosomal subunit, where it forms part of the central protuberance. In Prochlorococcus marinus (strain MIT 9303), this protein is Large ribosomal subunit protein uL18.